The following is a 28-amino-acid chain: Conotoxin Vi14b (28 aa).

2 disulfides stabilise this stretch: C4-C21 and C7-C18. N6-acetyllysine is present on residues K15 and K25.

In terms of processing, the two N6-acetyllysines at position 15 and 25 have been deduced from the mass difference of 42. They are not common in venom proteins. In terms of tissue distribution, expressed by the venom gland.

Its subcellular location is the secreted. Its function is as follows. In vitro, inhibits proliferation of the mice ovarian cancer cells ID8. The polypeptide is Conotoxin Vi14b (Conus virgo (Virgin cone)).